Here is a 372-residue protein sequence, read N- to C-terminus: Queuine tRNA-ribosyltransferase (372 aa).

Asp-92 acts as the Proton acceptor in catalysis. Residues Asp-92 to Tyr-96, Asp-146, Gln-188, and Gly-215 contribute to the substrate site. The interval Gly-246–Glu-252 is RNA binding. Residue Asp-265 is the Nucleophile of the active site. Residues Thr-270–Arg-274 form an RNA binding; important for wobble base 34 recognition region. Zn(2+) is bound by residues Cys-303, Cys-305, Cys-308, and His-334.

It belongs to the queuine tRNA-ribosyltransferase family. In terms of assembly, homodimer. Within each dimer, one monomer is responsible for RNA recognition and catalysis, while the other monomer binds to the replacement base PreQ1. Zn(2+) serves as cofactor.

It catalyses the reaction 7-aminomethyl-7-carbaguanine + guanosine(34) in tRNA = 7-aminomethyl-7-carbaguanosine(34) in tRNA + guanine. Its pathway is tRNA modification; tRNA-queuosine biosynthesis. Catalyzes the base-exchange of a guanine (G) residue with the queuine precursor 7-aminomethyl-7-deazaguanine (PreQ1) at position 34 (anticodon wobble position) in tRNAs with GU(N) anticodons (tRNA-Asp, -Asn, -His and -Tyr). Catalysis occurs through a double-displacement mechanism. The nucleophile active site attacks the C1' of nucleotide 34 to detach the guanine base from the RNA, forming a covalent enzyme-RNA intermediate. The proton acceptor active site deprotonates the incoming PreQ1, allowing a nucleophilic attack on the C1' of the ribose to form the product. After dissociation, two additional enzymatic reactions on the tRNA convert PreQ1 to queuine (Q), resulting in the hypermodified nucleoside queuosine (7-(((4,5-cis-dihydroxy-2-cyclopenten-1-yl)amino)methyl)-7-deazaguanosine). This is Queuine tRNA-ribosyltransferase from Prochlorococcus marinus (strain MIT 9515).